The primary structure comprises 358 residues: Thiol protease aleurain (358 aa).

A signal peptide spans 1 to 21; that stretch reads MSAKTILSSVVLVVLVAASAA. Positions 22–42 are interaction with VSR1; it reads ANIGFDESNPIRMVSDGLREV. A propeptide spans 22-140 (activation peptide); sequence ANIGFDESNP…KGSHKVTEAA (119 aa). Asparagine 125 carries an N-linked (GlcNAc...) asparagine glycan. 2 cysteine pairs are disulfide-bonded: cysteine 162/cysteine 205 and cysteine 196/cysteine 238. The active site involves cysteine 165. Asparagine 254 carries an N-linked (GlcNAc...) asparagine glycan. Cysteine 296 and cysteine 346 are oxidised to a cystine. Active-site residues include histidine 305 and asparagine 325.

This sequence belongs to the peptidase C1 family. Interacts with VSR1/BP80B. Expressed in leaves (at protein level).

The protein resides in the vacuole. The enzyme catalyses Hydrolysis of proteins, acting as an aminopeptidase (notably, cleaving Arg-|-Xaa bonds) as well as an endopeptidase.. Functionally, may play a role in proteolysis leading to mobilization of nitrogen during senescence and starvation. The protein is Thiol protease aleurain of Arabidopsis thaliana (Mouse-ear cress).